Reading from the N-terminus, the 244-residue chain is MSDTPQSPAQDSLAEHDEARPMRTVKSFVMRAGRMTEGQQRGLDLGWPKFGLELSDEVQDFDAIFGRQAPRTFEIGFGMGHSTLEMAAAAPDLDFIGVEVHKPGVGALLNGLLTQGLGNVRVYSCDALEVLRHCVADASLDRLLLFFPDPWHKKRHHKRRIVQPEFAELVRRKLKVGGVLHMATDWEPYAEHMLDVMSAAPGYRNQAEDGRFVPRPQERPVTKFERRGERLGHGVWDLKFERVD.

Over residues 1 to 10 (MSDTPQSPAQ) the composition is skewed to polar residues. The tract at residues 1-20 (MSDTPQSPAQDSLAEHDEAR) is disordered. The S-adenosyl-L-methionine site is built by glutamate 74, glutamate 99, aspartate 126, and aspartate 149. Residue aspartate 149 is part of the active site. Residues lysine 153, aspartate 185, and 222–225 (TKFE) each bind substrate.

Belongs to the class I-like SAM-binding methyltransferase superfamily. TrmB family.

The enzyme catalyses guanosine(46) in tRNA + S-adenosyl-L-methionine = N(7)-methylguanosine(46) in tRNA + S-adenosyl-L-homocysteine. Its pathway is tRNA modification; N(7)-methylguanine-tRNA biosynthesis. Its function is as follows. Catalyzes the formation of N(7)-methylguanine at position 46 (m7G46) in tRNA. In Pseudomonas paraeruginosa (strain DSM 24068 / PA7) (Pseudomonas aeruginosa (strain PA7)), this protein is tRNA (guanine-N(7)-)-methyltransferase.